The following is a 361-amino-acid chain: DNA double-strand break repair protein Mre11 (361 aa).

Positions 7, 9, 48, and 83 each coordinate Mn(2+). Residue histidine 84 is the Proton donor of the active site. Mn(2+)-binding residues include histidine 176, histidine 204, and histidine 206.

This sequence belongs to the MRE11/RAD32 family. In terms of assembly, homodimer. Forms a heterotetramer composed of two Mre11 subunits and two Rad50 subunits. Mn(2+) serves as cofactor.

Nuclease activity is regulated by Rad50. Part of the Rad50/Mre11 complex, which is involved in the early steps of DNA double-strand break (DSB) repair. The complex may facilitate opening of the processed DNA ends to aid in the recruitment of HerA and NurA. Mre11 binds to DSB ends and has both double-stranded 3'-5' exonuclease activity and single-stranded endonuclease activity. The sequence is that of DNA double-strand break repair protein Mre11 from Nanoarchaeum equitans (strain Kin4-M).